A 153-amino-acid chain; its full sequence is Putative pre-16S rRNA nuclease (153 aa).

This sequence belongs to the YqgF nuclease family.

The protein resides in the cytoplasm. Functionally, could be a nuclease involved in processing of the 5'-end of pre-16S rRNA. In Prochlorococcus marinus (strain SARG / CCMP1375 / SS120), this protein is Putative pre-16S rRNA nuclease.